The sequence spans 160 residues: Cytochrome b6-f complex subunit 4 (160 aa).

3 helical membrane-spanning segments follow: residues 36–56 (LLYI…GLAV), 95–115 (LLGI…PFIE), and 131–151 (VVFL…CLPI).

It belongs to the cytochrome b family. PetD subfamily. The 4 large subunits of the cytochrome b6-f complex are cytochrome b6, subunit IV (17 kDa polypeptide, PetD), cytochrome f and the Rieske protein, while the 4 small subunits are PetG, PetL, PetM and PetN. The complex functions as a dimer.

Its subcellular location is the cellular thylakoid membrane. Its function is as follows. Component of the cytochrome b6-f complex, which mediates electron transfer between photosystem II (PSII) and photosystem I (PSI), cyclic electron flow around PSI, and state transitions. In Prochlorococcus marinus (strain MIT 9515), this protein is Cytochrome b6-f complex subunit 4.